We begin with the raw amino-acid sequence, 180 residues long: Putative 3-methyladenine DNA glycosylase (180 aa).

This sequence belongs to the DNA glycosylase MPG family.

The protein is Putative 3-methyladenine DNA glycosylase of Ehrlichia chaffeensis (strain ATCC CRL-10679 / Arkansas).